A 383-amino-acid polypeptide reads, in one-letter code: MNELEFVTKHRRHLHQHPELSLHEFETTAYIKAFLDSLNIKYDCPLETGVIAYLEGNDSHTIAYRADIDALPILEENDVPYRSQSDHVMHACGHDGHTTALMLFVQRCKDMQDSGQLPQNVVFIFQPAEETGGGANRLIKAGAFDKYPIEAVFGIHVNPFADEGIAVIRDEEITASATEYRFFLTGLSSHVADKEQGHSCGEALQHVLTQISQIQQFHLNGLKRNIVHIGHFKAGEAINTVPSNGYLEGTIRTYDIDDLTIVKNQMQKIAESVKLLFNVDCEVKFAEGYPPTINSPKLRTQIEDALIKADLNVYDKPTPFLFGEDFSFYGQQLAPAYFVFIGTRNEDKGFVTGLHTSHLNFDEKVLINVVNFYENLLNNYKEV.

It belongs to the peptidase M20 family.

This is an uncharacterized protein from Staphylococcus aureus (strain bovine RF122 / ET3-1).